A 233-amino-acid polypeptide reads, in one-letter code: Small ribosomal subunit protein uS3 (233 aa).

Residues 39–107 (VRQYLNKELA…PAQINIAEVR (69 aa)) enclose the KH type-2 domain.

Belongs to the universal ribosomal protein uS3 family. In terms of assembly, part of the 30S ribosomal subunit. Forms a tight complex with proteins S10 and S14.

Its function is as follows. Binds the lower part of the 30S subunit head. Binds mRNA in the 70S ribosome, positioning it for translation. The polypeptide is Small ribosomal subunit protein uS3 (Cronobacter sakazakii (strain ATCC BAA-894) (Enterobacter sakazakii)).